A 506-amino-acid polypeptide reads, in one-letter code: Cobyric acid synthase (506 aa).

A GATase cobBQ-type domain is found at 254-453; the sequence is DLDIAVIRLP…IHGIFESDSF (200 aa). The active-site Nucleophile is cysteine 334. Histidine 445 is an active-site residue.

The protein belongs to the CobB/CobQ family. CobQ subfamily.

It participates in cofactor biosynthesis; adenosylcobalamin biosynthesis. Its function is as follows. Catalyzes amidations at positions B, D, E, and G on adenosylcobyrinic A,C-diamide. NH(2) groups are provided by glutamine, and one molecule of ATP is hydrogenolyzed for each amidation. The chain is Cobyric acid synthase from Dehalococcoides mccartyi (strain ATCC BAA-2266 / KCTC 15142 / 195) (Dehalococcoides ethenogenes (strain 195)).